Here is a 149-residue protein sequence, read N- to C-terminus: Large ribosomal subunit protein bL9 (149 aa).

It belongs to the bacterial ribosomal protein bL9 family.

Functionally, binds to the 23S rRNA. This chain is Large ribosomal subunit protein bL9, found in Actinobacillus succinogenes (strain ATCC 55618 / DSM 22257 / CCUG 43843 / 130Z).